The chain runs to 284 residues: Citrate lyase subunit beta-like protein (284 aa).

Substrate-binding residues include R74 and E129. Residues E129 and D155 each contribute to the Mg(2+) site.

This sequence belongs to the HpcH/HpaI aldolase family. Citrate lyase beta subunit-like subfamily. Homotrimer. Mg(2+) serves as cofactor.

In terms of biological role, may play a role in fatty acid biosynthesis. In Deinococcus radiodurans (strain ATCC 13939 / DSM 20539 / JCM 16871 / CCUG 27074 / LMG 4051 / NBRC 15346 / NCIMB 9279 / VKM B-1422 / R1), this protein is Citrate lyase subunit beta-like protein.